Here is a 50-residue protein sequence, read N- to C-terminus: Small ribosomal subunit protein uS14 (50 aa).

Residues Cys15, Cys18, Cys33, and Cys36 each contribute to the Zn(2+) site.

The protein belongs to the universal ribosomal protein uS14 family. Zinc-binding uS14 subfamily. As to quaternary structure, part of the 30S ribosomal subunit. The cofactor is Zn(2+).

In terms of biological role, binds 16S rRNA, required for the assembly of 30S particles. The protein is Small ribosomal subunit protein uS14 of Methanosarcina acetivorans (strain ATCC 35395 / DSM 2834 / JCM 12185 / C2A).